Consider the following 101-residue polypeptide: 2-amino-4-ketopentanoate thiolase alpha subunit (101 aa).

It belongs to the OrtA family. Heterodimer with OrtB.

It catalyses the reaction D-alanine + acetyl-CoA = (2R)-2-amino-4-oxopentanoate + CoA. Its function is as follows. Involved in the ornithine fermentation pathway. Catalyzes the thiolytic cleavage of 2-amino-4-ketopentanoate (AKP) with coenzyme A (CoA) to form acetyl-CoA and alanine. It is strictly specific for AKP. The polypeptide is 2-amino-4-ketopentanoate thiolase alpha subunit (Unknown prokaryotic organism).